The following is a 322-amino-acid chain: Ethylmalonyl-CoA decarboxylase (322 aa).

K232 is modified (N6-acetyllysine; alternate). N6-succinyllysine; alternate is present on K232. K316 is modified (N6-succinyllysine).

It belongs to the enoyl-CoA hydratase/isomerase family.

The protein localises to the cytoplasm. It is found in the cytosol. The enzyme catalyses (2S)-ethylmalonyl-CoA + H(+) = butanoyl-CoA + CO2. It catalyses the reaction (S)-methylmalonyl-CoA + H(+) = propanoyl-CoA + CO2. The catalysed reaction is (2R)-ethylmalonyl-CoA + H(+) = butanoyl-CoA + CO2. Decarboxylates ethylmalonyl-CoA, a potentially toxic metabolite, to form butyryl-CoA, suggesting it might be involved in metabolite proofreading. Acts preferentially on (S)-ethylmalonyl-CoA but also has some activity on the (R)-isomer. Also has methylmalonyl-CoA decarboxylase activity at lower level. This chain is Ethylmalonyl-CoA decarboxylase (Echdc1), found in Mus musculus (Mouse).